The following is a 497-amino-acid chain: MGLPALLASALCTFVLPLLLFLAAIKLWDLYCVSGRDRSCALPLPPGTMGFPFFGETLQMVLQRRKFLQMKRRKYGFIYKTHLFGRPTVRVMGADNVRRILLGEHRLVSVHWPASVRTILGSGCLSNLHDSSHKQRKKVIMRAFSREALECYVPVITEEVGSSLEQWLSCGERGLLVYPEVKRLMFRIAMRILLGCEPQLAGDGDSEQQLVEAFEEMTRNLFSLPIDVPFSGLYRGMKARNLIHARIEQNIRAKICGLRASEAGQGCKDALQLLIEHSWERGERLDMQALKQSSTELLFGGHETTASAATSLITYLGLYPHVLQKVREELKSKGLLCKSNQDNKLDMEILEQLKYIGCVIKETLRLNPPVPGGFRVALKTFELNGYQIPKGWNVIYSICDTHDVAEIFTNKEEFNPDRFMLPHPEDASRFSFIPFGGGLRSCVGKEFAKILLKIFTVELARHCDWQLLNGPPTMKTSPTVYPVDNLPARFTHFHGEI.

Cysteine 442 contributes to the heme binding site.

The protein belongs to the cytochrome P450 family. Requires heme as cofactor. As to expression, expressed in most fetal and adult tissues with highest levels in adult liver, heart, pituitary gland, adrenal gland, placenta and regions of the brain. Expressed at high levels in lung, pancreas, skin and uterus (at protein level). Lower expression level is detected in spleen, kidney, intestine and adipose tissue (at protein level).

The protein localises to the endoplasmic reticulum membrane. It localises to the microsome membrane. It carries out the reaction all-trans-retinoate + reduced [NADPH--hemoprotein reductase] + O2 = all-trans-(4S)-hydroxyretinoate + oxidized [NADPH--hemoprotein reductase] + H2O + H(+). It catalyses the reaction all-trans-(4S)-hydroxyretinoate + reduced [NADPH--hemoprotein reductase] + O2 = all-trans-(4S,16)-dihydroxyretinoate + oxidized [NADPH--hemoprotein reductase] + H2O + H(+). The enzyme catalyses all-trans-retinoate + reduced [NADPH--hemoprotein reductase] + O2 = all-trans-18-hydroxyretinoate + oxidized [NADPH--hemoprotein reductase] + H2O + H(+). A cytochrome P450 monooxygenase involved in the metabolism of retinoates (RAs), the active metabolites of vitamin A, and critical signaling molecules in animals. RAs exist as at least four different isomers: all-trans-RA (atRA), 9-cis-RA, 13-cis-RA, and 9,13-dicis-RA, where atRA is considered to be the biologically active isomer, although 9-cis-RA and 13-cis-RA also have activity. Catalyzes the hydroxylation of atRA primarily at C-4 and C-18, thereby contributing to the regulation of atRA homeostasis and signaling. Hydroxylation of atRA limits its biological activity and initiates a degradative process leading to its eventual elimination. Involved in the convertion of atRA to all-trans-4-oxo-RA. Able to metabolize other RAs such as 9-cis, 13-cis and 9,13-di-cis RA. Can oxidize all-trans-13,14-dihydroretinoate (DRA) to metabolites which could include all-trans-4-oxo-DRA, all-trans-4-hydroxy-DRA, all-trans-5,8-epoxy-DRA, and all-trans-18-hydroxy-DRA. May play a role in the oxidative metabolism of xenobiotics such as tazarotenic acid. The polypeptide is Cytochrome P450 26A1 (Homo sapiens (Human)).